Reading from the N-terminus, the 137-residue chain is Basic phospholipase A2 PeBP(R)-I/II (137 aa).

The first 16 residues, 1 to 16, serve as a signal peptide directing secretion; the sequence is MRTLWIMAVLLLGVEG. 7 cysteine pairs are disulfide-bonded: Cys42/Cys131, Cys44/Cys60, Cys59/Cys111, Cys65/Cys137, Cys66/Cys104, Cys73/Cys97, and Cys91/Cys102. His63 is a catalytic residue. Asp105 is a catalytic residue.

The protein belongs to the phospholipase A2 family. Group II subfamily. R49 sub-subfamily. As to expression, expressed by the venom gland.

It is found in the secreted. It catalyses the reaction a 1,2-diacyl-sn-glycero-3-phosphocholine + H2O = a 1-acyl-sn-glycero-3-phosphocholine + a fatty acid + H(+). Snake venom phospholipases A2 that have myotoxic, and edema-inducing activity, as well as extremely weak lipolytic activity. PLA2 catalyzes the calcium-dependent hydrolysis of the 2-acyl groups in 3-sn-phosphoglycerides. The chain is Basic phospholipase A2 PeBP(R)-I/II from Protobothrops elegans (Elegant pitviper).